A 199-amino-acid polypeptide reads, in one-letter code: Isopentenyl-diphosphate Delta-isomerase (199 aa).

The Mn(2+) site is built by H40 and H47. A Nudix hydrolase domain is found at 45–186; it reads PRHLAFSCHV…PALLSPWAVE (142 aa). C82 is an active-site residue. A Mg(2+)-binding site is contributed by C82. Position 84 (H84) interacts with Mn(2+). Residue E102 participates in Mg(2+) binding. E131 and E133 together coordinate Mn(2+). Residue E133 is part of the active site.

The protein belongs to the IPP isomerase type 1 family. The cofactor is Mg(2+). Requires Mn(2+) as cofactor.

Its subcellular location is the cytoplasm. The enzyme catalyses isopentenyl diphosphate = dimethylallyl diphosphate. The protein operates within isoprenoid biosynthesis; dimethylallyl diphosphate biosynthesis; dimethylallyl diphosphate from isopentenyl diphosphate: step 1/1. Functionally, catalyzes the 1,3-allylic rearrangement of the homoallylic substrate isopentenyl (IPP) to its highly electrophilic allylic isomer, dimethylallyl diphosphate (DMAPP). This Cutibacterium acnes (strain DSM 16379 / KPA171202) (Propionibacterium acnes) protein is Isopentenyl-diphosphate Delta-isomerase.